The chain runs to 291 residues: uncharacterized protein (291 aa).

The interval 1 to 82 (MEAEKETEQE…SYSSSPFETH (82 aa)) is disordered. Composition is skewed to low complexity over residues 28 to 43 (HSHS…ISAS) and 59 to 78 (STSS…SSSP).

This is an uncharacterized protein from Arabidopsis thaliana (Mouse-ear cress).